The primary structure comprises 418 residues: Equilibrative nucleotide transporter 4 (418 aa).

Helical transmembrane passes span 20 to 40, 54 to 74, 85 to 105, 108 to 128, 147 to 169, 186 to 206, 264 to 284, 291 to 311, 326 to 346, 353 to 373, and 392 to 412; these read MVVC…MLTI, SRVF…ILAY, ILTG…LDLT, GHGG…FGLA, LIQS…RLIT, IFLA…AYVF, HAVN…GFLY, GLGD…DLFG, KALT…YFTA, WMIM…VCIM, and LVVF…LWLI.

The protein belongs to the SLC29A/ENT transporter (TC 2.A.57) family. As to expression, expressed in leaves and at lowe levels in stems and flowers.

It localises to the cell membrane. Nucleoside transporter that can mediate uptake of adenosine, uridine, guanosine or cytidine when expressed in a heterologous system (yeast). The polypeptide is Equilibrative nucleotide transporter 4 (ENT4) (Arabidopsis thaliana (Mouse-ear cress)).